A 63-amino-acid polypeptide reads, in one-letter code: Large ribosomal subunit protein uL29 (63 aa).

It belongs to the universal ribosomal protein uL29 family.

The chain is Large ribosomal subunit protein uL29 from Aliivibrio fischeri (strain ATCC 700601 / ES114) (Vibrio fischeri).